Consider the following 387-residue polypeptide: [LysW]-aminoadipate semialdehyde/glutamate semialdehyde transaminase (387 aa).

Pyridoxal 5'-phosphate is bound by residues 96 to 97 (GT) and Phe-123. Arg-126 contributes to the substrate binding site. Position 207 to 210 (207 to 210 (DEVQ)) interacts with pyridoxal 5'-phosphate. Lys-236 bears the N6-(pyridoxal phosphate)lysine mark. Residue Ser-264 coordinates substrate. Thr-265 lines the pyridoxal 5'-phosphate pocket.

The protein belongs to the class-III pyridoxal-phosphate-dependent aminotransferase family. LysJ subfamily. As to quaternary structure, homodimer. The cofactor is pyridoxal 5'-phosphate.

Its subcellular location is the cytoplasm. It carries out the reaction [amino-group carrier protein]-C-terminal-gamma-(L-lysyl)-L-glutamate + 2-oxoglutarate = [amino-group carrier protein]-C-terminal-N-(1-carboxy-5-oxopentan-1-yl)-L-glutamine + L-glutamate. The enzyme catalyses [amino-group carrier protein]-C-terminal-gamma-(L-ornithyl)-L-glutamate + 2-oxoglutarate = [amino-group carrier protein]-C-terminal-gamma-(L-glutamyl-5-semialdehyde)-L-glutamate + L-glutamate. It participates in amino-acid biosynthesis; L-lysine biosynthesis via AAA pathway; L-lysine from L-alpha-aminoadipate (Thermus route): step 4/5. The protein operates within amino-acid biosynthesis; L-arginine biosynthesis. Functionally, involved in both the arginine and lysine biosynthetic pathways. This chain is [LysW]-aminoadipate semialdehyde/glutamate semialdehyde transaminase, found in Sulfurisphaera tokodaii (strain DSM 16993 / JCM 10545 / NBRC 100140 / 7) (Sulfolobus tokodaii).